The chain runs to 129 residues: Large ribosomal subunit protein bL20 (129 aa).

Belongs to the bacterial ribosomal protein bL20 family.

Binds directly to 23S ribosomal RNA and is necessary for the in vitro assembly process of the 50S ribosomal subunit. It is not involved in the protein synthesizing functions of that subunit. The protein is Large ribosomal subunit protein bL20 of Mycobacteroides abscessus (strain ATCC 19977 / DSM 44196 / CCUG 20993 / CIP 104536 / JCM 13569 / NCTC 13031 / TMC 1543 / L948) (Mycobacterium abscessus).